A 412-amino-acid polypeptide reads, in one-letter code: MGLKHLIEKLEPHFTHGGKLEKYYPLYEAAATIFYTPGQVTRGAAHVRDAIDLKRMMILVWFAVFPAMFWGMYNVGLQTIPALHKLYGAEQLQQAIANNWHYSVAQWLGVSFSADAGWLSMMTLGAVFFLPIYITVFIVGGFWEVLFAIVRKHEINEGFFVTSILFALIVPPTLPLWQAALGISFGVVIAKEIFGGTGRNFLNPALAGRAFLFFAYPAQISGDLVWTAADGFSGATPLSQWASGGGEALVNVATGVPVSWMDAFLGNIPGSIGEVSTLMIFIGGAIILFGRVASWRIVAGVMIGMIATATLFNVIGSDTNPMFAMPWYWHLVLGGFAFGMMFMATDPVSASFTDKGKWSYGVLIGVMCVLIRVVNPAYPEGMMLAILFANLFAPLFDYLVVQANIKRRKSRG.

A run of 3 helical transmembrane segments spans residues 57-77 (MILV…NVGL), 127-147 (VFFL…EVLF), and 163-183 (SILF…ALGI). Position 236 is an FMN phosphoryl threonine (T236). The next 5 membrane-spanning stretches (helical) occupy residues 270 to 290 (GSIG…ILFG), 297 to 317 (IVAG…VIGS), 322 to 342 (MFAM…GMMF), 358 to 378 (WSYG…NPAY), and 381 to 401 (GMML…YLVV).

This sequence belongs to the NqrB/RnfD family. Composed of six subunits; NqrA, NqrB, NqrC, NqrD, NqrE and NqrF. It depends on FMN as a cofactor.

Its subcellular location is the cell inner membrane. The enzyme catalyses a ubiquinone + n Na(+)(in) + NADH + H(+) = a ubiquinol + n Na(+)(out) + NAD(+). In terms of biological role, NQR complex catalyzes the reduction of ubiquinone-1 to ubiquinol by two successive reactions, coupled with the transport of Na(+) ions from the cytoplasm to the periplasm. NqrA to NqrE are probably involved in the second step, the conversion of ubisemiquinone to ubiquinol. This Klebsiella pneumoniae subsp. pneumoniae (strain ATCC 700721 / MGH 78578) protein is Na(+)-translocating NADH-quinone reductase subunit B.